A 216-amino-acid chain; its full sequence is Adenylate kinase (216 aa).

10 to 15 (GAGKGT) contacts ATP. The interval 30 to 59 (STGDIFRKNISEKTPLGVKAKEYMDKGQLV) is NMP. AMP contacts are provided by residues Thr-31, Arg-36, 57-59 (QLV), 85-88 (GFPR), and Gln-92. Residues 126-163 (GRRVCPSCGASYHIKFNPPKIEGLCDVCKKEVIQRKDD) form an LID region. Arg-127 contacts ATP. Positions 130 and 133 each coordinate Zn(2+). 136-137 (SY) serves as a coordination point for ATP. Cys-150 and Cys-153 together coordinate Zn(2+). 2 residues coordinate AMP: Arg-160 and Arg-171. Residue Gln-199 coordinates ATP.

This sequence belongs to the adenylate kinase family. As to quaternary structure, monomer.

It is found in the cytoplasm. It carries out the reaction AMP + ATP = 2 ADP. The protein operates within purine metabolism; AMP biosynthesis via salvage pathway; AMP from ADP: step 1/1. Its function is as follows. Catalyzes the reversible transfer of the terminal phosphate group between ATP and AMP. Plays an important role in cellular energy homeostasis and in adenine nucleotide metabolism. The polypeptide is Adenylate kinase (Clostridium novyi (strain NT)).